A 544-amino-acid polypeptide reads, in one-letter code: Pyruvate kinase (544 aa).

R31 provides a ligand contact to substrate. The K(+) site is built by N33 and D61. Residue 33 to 36 (NSAH) coordinates ATP. Residue R68 participates in ATP binding. E204 is a Mg(2+) binding site. G227, D228, and T260 together coordinate substrate. Residue D228 coordinates Mg(2+).

It belongs to the pyruvate kinase family. As to quaternary structure, homotetramer. Requires Mg(2+) as cofactor. It depends on K(+) as a cofactor.

It catalyses the reaction pyruvate + ATP = phosphoenolpyruvate + ADP + H(+). It functions in the pathway carbohydrate degradation; glycolysis; pyruvate from D-glyceraldehyde 3-phosphate: step 5/5. In Thermoplasma acidophilum (strain ATCC 25905 / DSM 1728 / JCM 9062 / NBRC 15155 / AMRC-C165), this protein is Pyruvate kinase.